A 182-amino-acid polypeptide reads, in one-letter code: UPF0397 protein BCA_2731 (182 aa).

Helical transmembrane passes span 9 to 29 (VVAI…GFSI), 40 to 60 (AILT…IGLI), 71 to 91 (WGIW…MGLI), 114 to 134 (ITGL…DIIV), and 142 to 162 (IVIQ…VLGL).

Belongs to the UPF0397 family.

It is found in the cell membrane. The protein is UPF0397 protein BCA_2731 of Bacillus cereus (strain 03BB102).